The sequence spans 507 residues: MLWYIVAGAGGLLIGYLIASYQINQKLRKAKEDAQTIIEKAEKEANEIKKKAIIEGREEVHRLREEFEKERSRREEELRAFEERILKREELLTRKEENLEKREHQIEELKANLEEKMREVEEKEKRIDEELKRLAGMTVEEARELILEEARQRYEHDLAKLYKEMKEQVEEEVEKEAKKVIAFAVQRYAPDYVGEITVSTVSLPSDDMKGRIIGREGRNIRTFEKITGVDLIIDDTPEVVVLSCFNPLRREIARITLEKLVADGRIHPARIEEMYEKAKQEVEKAIKEAGQEATFKAGVMGLHPELVKLLGKLKYRTSYGQNVLNHSIEVALLAGYMASELGLNADKARRGGLLHDIGKAVDQELEGSHTTIGAELARRYGEKEDIINMILSHHGEEEPMTPEAVLVAAADALSAARPGARRESLENYIKRLMKLEEIAKSFKYVEKAYAIQAGREIRVIVEPDKVDDALAEKLAYDISKKIEEELEYPGVLKVVVIREKRSVAYAK.

Residues 1 to 21 traverse the membrane as a helical segment; that stretch reads MLWYIVAGAGGLLIGYLIASY. One can recognise a KH domain in the interval 197–282; sequence TVSTVSLPSD…EMYEKAKQEV (86 aa). One can recognise an HD domain in the interval 323–416; sequence VLNHSIEVAL…VAAADALSAA (94 aa).

The protein belongs to the RNase Y family.

It is found in the cell membrane. Its function is as follows. Endoribonuclease that initiates mRNA decay. This Thermotoga petrophila (strain ATCC BAA-488 / DSM 13995 / JCM 10881 / RKU-1) protein is Ribonuclease Y.